Reading from the N-terminus, the 353-residue chain is Biotin synthase (353 aa).

Residues 51–270 (NEVQCNQLLN…IALARIMMPK (220 aa)) enclose the Radical SAM core domain. Positions 66, 70, and 73 each coordinate [4Fe-4S] cluster. 4 residues coordinate [2Fe-2S] cluster: Cys110, Cys141, Cys201, and Arg274. The interval 330-353 (APVEAHSHDHDHDHHDHHHGHSHS) is disordered. The segment covering 334 to 343 (AHSHDHDHDH) has biased composition (basic and acidic residues). Residues 344 to 353 (HDHHHGHSHS) show a composition bias toward basic residues.

This sequence belongs to the radical SAM superfamily. Biotin synthase family. In terms of assembly, homodimer. Requires [4Fe-4S] cluster as cofactor. The cofactor is [2Fe-2S] cluster.

It catalyses the reaction (4R,5S)-dethiobiotin + (sulfur carrier)-SH + 2 reduced [2Fe-2S]-[ferredoxin] + 2 S-adenosyl-L-methionine = (sulfur carrier)-H + biotin + 2 5'-deoxyadenosine + 2 L-methionine + 2 oxidized [2Fe-2S]-[ferredoxin]. It participates in cofactor biosynthesis; biotin biosynthesis; biotin from 7,8-diaminononanoate: step 2/2. Its function is as follows. Catalyzes the conversion of dethiobiotin (DTB) to biotin by the insertion of a sulfur atom into dethiobiotin via a radical-based mechanism. The polypeptide is Biotin synthase (Rhodopseudomonas palustris (strain HaA2)).